The primary structure comprises 485 residues: Glutamate--tRNA ligase (485 aa).

A 'HIGH' region motif is present at residues 12–22 (PSPTGYMHVGN). 4 residues coordinate Zn(2+): Cys109, Cys111, Cys136, and His138. A 'KMSKS' region motif is present at residues 253-257 (KLSKR). Residue Lys256 coordinates ATP.

This sequence belongs to the class-I aminoacyl-tRNA synthetase family. Glutamate--tRNA ligase type 1 subfamily. Monomer. Zn(2+) serves as cofactor.

Its subcellular location is the cytoplasm. It carries out the reaction tRNA(Glu) + L-glutamate + ATP = L-glutamyl-tRNA(Glu) + AMP + diphosphate. Functionally, catalyzes the attachment of glutamate to tRNA(Glu) in a two-step reaction: glutamate is first activated by ATP to form Glu-AMP and then transferred to the acceptor end of tRNA(Glu). This chain is Glutamate--tRNA ligase, found in Clostridium botulinum (strain Eklund 17B / Type B).